A 413-amino-acid polypeptide reads, in one-letter code: Serine/threonine transporter SstT (413 aa).

The next 8 membrane-spanning stretches (helical) occupy residues Ile19–Val39, Ala61–Gly81, Ile89–Phe109, Ala148–Leu168, Ile189–Leu209, Leu223–Val243, Ile297–Leu317, and Ile325–Gly345.

It belongs to the dicarboxylate/amino acid:cation symporter (DAACS) (TC 2.A.23) family.

It localises to the cell inner membrane. It carries out the reaction L-serine(in) + Na(+)(in) = L-serine(out) + Na(+)(out). The enzyme catalyses L-threonine(in) + Na(+)(in) = L-threonine(out) + Na(+)(out). In terms of biological role, involved in the import of serine and threonine into the cell, with the concomitant import of sodium (symport system). The chain is Serine/threonine transporter SstT from Pasteurella multocida (strain Pm70).